The sequence spans 169 residues: Ribosome maturation factor RimM (169 aa).

In terms of domain architecture, PRC barrel spans 94–168 (DDEFYHADLI…RIVADPPEGL (75 aa)).

It belongs to the RimM family. As to quaternary structure, binds ribosomal protein uS19.

The protein resides in the cytoplasm. Functionally, an accessory protein needed during the final step in the assembly of 30S ribosomal subunit, possibly for assembly of the head region. Essential for efficient processing of 16S rRNA. May be needed both before and after RbfA during the maturation of 16S rRNA. It has affinity for free ribosomal 30S subunits but not for 70S ribosomes. The chain is Ribosome maturation factor RimM from Cereibacter sphaeroides (strain ATCC 17029 / ATH 2.4.9) (Rhodobacter sphaeroides).